We begin with the raw amino-acid sequence, 74 residues long: Acyl carrier protein (74 aa).

The Carrier domain occupies 1–73 (MAVFEKVQEI…DLVAYVEEKS (73 aa)). S35 carries the post-translational modification O-(pantetheine 4'-phosphoryl)serine.

It belongs to the acyl carrier protein (ACP) family. Post-translationally, 4'-phosphopantetheine is transferred from CoA to a specific serine of apo-ACP by AcpS. This modification is essential for activity because fatty acids are bound in thioester linkage to the sulfhydryl of the prosthetic group.

It is found in the cytoplasm. Its pathway is lipid metabolism; fatty acid biosynthesis. Functionally, carrier of the growing fatty acid chain in fatty acid biosynthesis. This Streptococcus pyogenes serotype M1 protein is Acyl carrier protein.